We begin with the raw amino-acid sequence, 293 residues long: Glycine--tRNA ligase alpha subunit (293 aa).

This sequence belongs to the class-II aminoacyl-tRNA synthetase family. Tetramer of two alpha and two beta subunits.

It localises to the cytoplasm. The enzyme catalyses tRNA(Gly) + glycine + ATP = glycyl-tRNA(Gly) + AMP + diphosphate. The polypeptide is Glycine--tRNA ligase alpha subunit (Wolinella succinogenes (strain ATCC 29543 / DSM 1740 / CCUG 13145 / JCM 31913 / LMG 7466 / NCTC 11488 / FDC 602W) (Vibrio succinogenes)).